Consider the following 233-residue polypeptide: Orotidine 5'-phosphate decarboxylase (233 aa).

Substrate is bound by residues aspartate 9, lysine 31, 58-67 (DLKLHDIPNT), threonine 120, arginine 182, glutamine 191, glycine 211, and arginine 212. Residue lysine 60 is the Proton donor of the active site.

The protein belongs to the OMP decarboxylase family. Type 1 subfamily. As to quaternary structure, homodimer.

It catalyses the reaction orotidine 5'-phosphate + H(+) = UMP + CO2. Its pathway is pyrimidine metabolism; UMP biosynthesis via de novo pathway; UMP from orotate: step 2/2. Its function is as follows. Catalyzes the decarboxylation of orotidine 5'-monophosphate (OMP) to uridine 5'-monophosphate (UMP). In Listeria monocytogenes serovar 1/2a (strain ATCC BAA-679 / EGD-e), this protein is Orotidine 5'-phosphate decarboxylase.